The sequence spans 250 residues: 3-deoxy-manno-octulosonate cytidylyltransferase (250 aa).

Belongs to the KdsB family.

The protein localises to the cytoplasm. It carries out the reaction 3-deoxy-alpha-D-manno-oct-2-ulosonate + CTP = CMP-3-deoxy-beta-D-manno-octulosonate + diphosphate. It functions in the pathway nucleotide-sugar biosynthesis; CMP-3-deoxy-D-manno-octulosonate biosynthesis; CMP-3-deoxy-D-manno-octulosonate from 3-deoxy-D-manno-octulosonate and CTP: step 1/1. The protein operates within bacterial outer membrane biogenesis; lipopolysaccharide biosynthesis. In terms of biological role, activates KDO (a required 8-carbon sugar) for incorporation into bacterial lipopolysaccharide in Gram-negative bacteria. The sequence is that of 3-deoxy-manno-octulosonate cytidylyltransferase from Bacteroides thetaiotaomicron (strain ATCC 29148 / DSM 2079 / JCM 5827 / CCUG 10774 / NCTC 10582 / VPI-5482 / E50).